The following is a 356-amino-acid chain: Glutamine synthetase root isozyme 3 (356 aa).

In terms of domain architecture, GS beta-grasp spans 19-99; that stretch reads IIAEYIWIGG…VMCDCYTPAG (81 aa). In terms of domain architecture, GS catalytic spans 106-356; that stretch reads KRYNAAKIFS…IAETTIIWKP (251 aa).

The protein belongs to the glutamine synthetase family. Homooctamer. As to expression, found in all the tissues examined with higher expression found in tissues of the root.

The protein resides in the cytoplasm. It catalyses the reaction L-glutamate + NH4(+) + ATP = L-glutamine + ADP + phosphate + H(+). In terms of biological role, plays a role in the flow of nitrogen into nitrogenous organic compounds. The polypeptide is Glutamine synthetase root isozyme 3 (GLN4) (Zea mays (Maize)).